Reading from the N-terminus, the 390-residue chain is UPF0496 protein At1g20180 (390 aa).

The next 2 helical transmembrane spans lie at 228 to 248 (LGGY…LIIA) and 250 to 270 (HSIL…FCLL).

The protein belongs to the UPF0496 family.

Its subcellular location is the membrane. This chain is UPF0496 protein At1g20180, found in Arabidopsis thaliana (Mouse-ear cress).